We begin with the raw amino-acid sequence, 156 residues long: 6,7-dimethyl-8-ribityllumazine synthase (156 aa).

5-amino-6-(D-ribitylamino)uracil is bound by residues Phe-23, 57-59, and 81-83; these read AFE and AVI. 86–87 contributes to the (2S)-2-hydroxy-3-oxobutyl phosphate binding site; the sequence is AT. Residue His-89 is the Proton donor of the active site. Asn-114 provides a ligand contact to 5-amino-6-(D-ribitylamino)uracil. Arg-128 is a (2S)-2-hydroxy-3-oxobutyl phosphate binding site.

It belongs to the DMRL synthase family.

The catalysed reaction is (2S)-2-hydroxy-3-oxobutyl phosphate + 5-amino-6-(D-ribitylamino)uracil = 6,7-dimethyl-8-(1-D-ribityl)lumazine + phosphate + 2 H2O + H(+). Its pathway is cofactor biosynthesis; riboflavin biosynthesis; riboflavin from 2-hydroxy-3-oxobutyl phosphate and 5-amino-6-(D-ribitylamino)uracil: step 1/2. Catalyzes the formation of 6,7-dimethyl-8-ribityllumazine by condensation of 5-amino-6-(D-ribitylamino)uracil with 3,4-dihydroxy-2-butanone 4-phosphate. This is the penultimate step in the biosynthesis of riboflavin. The protein is 6,7-dimethyl-8-ribityllumazine synthase of Aliarcobacter butzleri (strain RM4018) (Arcobacter butzleri).